The chain runs to 682 residues: UvrABC system protein B (682 aa).

Residues 27 to 414 (DNIRAGVAHQ…SEGIVVEQII (388 aa)) form the Helicase ATP-binding domain. 40-47 (GVTGSGKT) provides a ligand contact to ATP. A Beta-hairpin motif is present at residues 93-116 (YYDYYQPEAYVPTSDTYIEKDSSI). Residues 432-594 (QMEDLMTECR…IEPVSVRKSL (163 aa)) form the Helicase C-terminal domain. The tract at residues 609–628 (AAKGRGKGRGRQAAPAQTAA) is disordered. A UVR domain is found at 642–677 (GGLIQRLEREMRESARDLEFEKAAELRDRIRMLRER).

This sequence belongs to the UvrB family. As to quaternary structure, forms a heterotetramer with UvrA during the search for lesions. Interacts with UvrC in an incision complex.

The protein resides in the cytoplasm. Functionally, the UvrABC repair system catalyzes the recognition and processing of DNA lesions. A damage recognition complex composed of 2 UvrA and 2 UvrB subunits scans DNA for abnormalities. Upon binding of the UvrA(2)B(2) complex to a putative damaged site, the DNA wraps around one UvrB monomer. DNA wrap is dependent on ATP binding by UvrB and probably causes local melting of the DNA helix, facilitating insertion of UvrB beta-hairpin between the DNA strands. Then UvrB probes one DNA strand for the presence of a lesion. If a lesion is found the UvrA subunits dissociate and the UvrB-DNA preincision complex is formed. This complex is subsequently bound by UvrC and the second UvrB is released. If no lesion is found, the DNA wraps around the other UvrB subunit that will check the other stand for damage. This Oleidesulfovibrio alaskensis (strain ATCC BAA-1058 / DSM 17464 / G20) (Desulfovibrio alaskensis) protein is UvrABC system protein B.